A 488-amino-acid chain; its full sequence is E3 ubiquitin-protein ligase RNF8 (488 aa).

The FHA domain maps to 38-92; that stretch reads VTIGRGLSVTYQLISKVCPLMISRSHCVLKQNPEGQWTIMDNKSLNGVWLNRERL. Residues 68 to 72 form a required for interaction with PIWIL1 region; it reads QNPEG. Positions 141-164 are disordered; the sequence is DQRMEKHKGSRTKRKFSSPGLENL. Over residues 145–156 the composition is skewed to basic residues; sequence EKHKGSRTKRKF. Ser-157 bears the Phosphoserine mark. The RING-type zinc finger occupies 406–444; it reads CIICSEYFIEAVTLNCAHSFCSFCINEWMKRKVECPICR.

The protein belongs to the RNF8 family. Homodimer. Forms a E2-E3 ubiquitin ligase complex composed of the RNF8 homodimer and a E2 heterodimer of UBE2N and UBE2V2. Interacts with class III E2s, including UBE2E1, UBE2E2, and UBE2E3 and with UBE2N. Interacts with RXRA. Interacts (via FHA domain) with ATM-phosphorylated MDC1. Interacts (via FHA domain) with 'Thr-4829' phosphorylated HERC2 (via C-terminus). Interacts with PIWIL1; leading to sequester RNF8 in the cytoplasm. Interacts with WRAP53/TCAB1. As to quaternary structure, (Microbial infection) May interact with the L.monocytogenes protein actA; however, given these errors in the sequence (AJ242721), the relevance of the interaction with actA remains to be confirmed. Post-translationally, autoubiquitinated through 'Lys-48' and 'Lys-63' of ubiquitin. 'Lys-63' polyubiquitination is mediated by UBE2N. 'Lys-29'-type polyubiquitination is also observed, but it doesn't require its own functional RING-type zinc finger.

Its subcellular location is the nucleus. The protein resides in the cytoplasm. It localises to the midbody. The protein localises to the chromosome. It is found in the telomere. It catalyses the reaction S-ubiquitinyl-[E2 ubiquitin-conjugating enzyme]-L-cysteine + [acceptor protein]-L-lysine = [E2 ubiquitin-conjugating enzyme]-L-cysteine + N(6)-ubiquitinyl-[acceptor protein]-L-lysine.. It participates in protein modification; protein ubiquitination. In terms of biological role, E3 ubiquitin-protein ligase that plays a key role in DNA damage signaling via 2 distinct roles: by mediating the 'Lys-63'-linked ubiquitination of histones H2A and H2AX and promoting the recruitment of DNA repair proteins at double-strand breaks (DSBs) sites, and by catalyzing 'Lys-48'-linked ubiquitination to remove target proteins from DNA damage sites. Following DNA DSBs, it is recruited to the sites of damage by ATM-phosphorylated MDC1 and catalyzes the 'Lys-63'-linked ubiquitination of histones H2A and H2AX, thereby promoting the formation of TP53BP1 and BRCA1 ionizing radiation-induced foci (IRIF). Also controls the recruitment of UIMC1-BRCC3 (RAP80-BRCC36) and PAXIP1/PTIP to DNA damage sites. Promotes the recruitment of NBN to DNA damage sites by catalyzing 'Lys-6'-linked ubiquitination of NBN. Also recruited at DNA interstrand cross-links (ICLs) sites and catalyzes 'Lys-63'-linked ubiquitination of histones H2A and H2AX, leading to recruitment of FAAP20 and Fanconi anemia (FA) complex, followed by interstrand cross-link repair. H2A ubiquitination also mediates the ATM-dependent transcriptional silencing at regions flanking DSBs in cis, a mechanism to avoid collision between transcription and repair intermediates. Promotes the formation of 'Lys-63'-linked polyubiquitin chains via interactions with the specific ubiquitin-conjugating UBE2N/UBC13 and ubiquitinates non-histone substrates such as PCNA. Substrates that are polyubiquitinated at 'Lys-63' are usually not targeted for degradation. Also catalyzes the formation of 'Lys-48'-linked polyubiquitin chains via interaction with the ubiquitin-conjugating UBE2L6/UBCH8, leading to degradation of substrate proteins such as CHEK2, JMJD2A/KDM4A and KU80/XRCC5: it is still unclear how the preference toward 'Lys-48'- versus 'Lys-63'-linked ubiquitination is regulated but it could be due to RNF8 ability to interact with specific E2 specific ligases. For instance, interaction with phosphorylated HERC2 promotes the association between RNF8 and UBE2N/UBC13 and favors the specific formation of 'Lys-63'-linked ubiquitin chains. Promotes non-homologous end joining (NHEJ) by promoting the 'Lys-48'-linked ubiquitination and degradation the of KU80/XRCC5. Following DNA damage, mediates the ubiquitination and degradation of JMJD2A/KDM4A in collaboration with RNF168, leading to unmask H4K20me2 mark and promote the recruitment of TP53BP1 at DNA damage sites. Following DNA damage, mediates the ubiquitination and degradation of POLD4/p12, a subunit of DNA polymerase delta. In the absence of POLD4, DNA polymerase delta complex exhibits higher proofreading activity. In addition to its function in damage signaling, also plays a role in higher-order chromatin structure by mediating extensive chromatin decondensation. Involved in the activation of ATM by promoting histone H2B ubiquitination, which indirectly triggers histone H4 'Lys-16' acetylation (H4K16ac), establishing a chromatin environment that promotes efficient activation of ATM kinase. Required in the testis, where it plays a role in the replacement of histones during spermatogenesis. At uncapped telomeres, promotes the joining of deprotected chromosome ends by inducing H2A ubiquitination and TP53BP1 recruitment, suggesting that it may enhance cancer development by aggravating telomere-induced genome instability in case of telomeric crisis. Promotes the assembly of RAD51 at DNA DSBs in the absence of BRCA1 and TP53BP1 Also involved in class switch recombination in immune system, via its role in regulation of DSBs repair. May be required for proper exit from mitosis after spindle checkpoint activation and may regulate cytokinesis. May play a role in the regulation of RXRA-mediated transcriptional activity. Not involved in RXRA ubiquitination by UBE2E2. The sequence is that of E3 ubiquitin-protein ligase RNF8 from Mus musculus (Mouse).